The following is a 68-amino-acid chain: Neuronal regeneration-related protein (68 aa).

Residues Met21–Ser54 are disordered. The segment covering Thr44–Ser54 has biased composition (polar residues).

Interacts with the latency-associated peptides (LAP) of TGFB1 and TGFB2; the interaction results in a decrease in TGFB autoinduction. Interacts with FLNA. Post-translationally, phosphorylated on Ser-59. Phosphorylation decreases stability and activity.

Its subcellular location is the cytoplasm. In terms of biological role, may have roles in neural function and cellular differentiation. Ectopic expression promotes axonal regeneration, induces differentiation of fibroblast into myofibroblast, induces myofibroblast ameboid migration, augments motility of gliomas, and increases retinoic-acid regulation of lipid-droplet biogenesis. Down-regulates the expression of TGFB1 and TGFB2 but not of TGFB3. May play a role in the regulation of alveolar generation. This is Neuronal regeneration-related protein (NREP) from Pongo abelii (Sumatran orangutan).